The chain runs to 449 residues: Doublesex- and mab-3-related transcription factor A2 (449 aa).

The DM DNA-binding region spans 57-104 (CARCRNHGVVSALKGHKRYCRWKDCMCAKCTLIAERQRVMAAQVALRR). Positions 166 to 259 (KNQLSGSATP…PSPSSAASRH (94 aa)) are disordered. The segment covering 167 to 177 (NQLSGSATPQP) has biased composition (polar residues). Over residues 230-240 (GSVSSIGSDSG) the composition is skewed to low complexity. Positions 260–295 (MNAIDILTRVFPSHKRSVLELVLQGCGKDVVQAIEQ) constitute a DMA domain.

This sequence belongs to the DMRT family.

Its subcellular location is the nucleus. Functionally, may be involved in sexual development. This Oreochromis niloticus (Nile tilapia) protein is Doublesex- and mab-3-related transcription factor A2 (dmrta2).